Consider the following 464-residue polypeptide: Argininosuccinate lyase (464 aa).

The protein belongs to the lyase 1 family. Argininosuccinate lyase subfamily.

Its subcellular location is the cytoplasm. It catalyses the reaction 2-(N(omega)-L-arginino)succinate = fumarate + L-arginine. The protein operates within amino-acid biosynthesis; L-arginine biosynthesis; L-arginine from L-ornithine and carbamoyl phosphate: step 3/3. The sequence is that of Argininosuccinate lyase from Moorella thermoacetica (strain ATCC 39073 / JCM 9320).